Here is a 203-residue protein sequence, read N- to C-terminus: Thymidine kinase (203 aa).

ATP-binding positions include 21 to 28 (GCMFAGKT) and 99 to 102 (DEIQ). Catalysis depends on Glu-100, which acts as the Proton acceptor. The Zn(2+) site is built by Cys-156, Cys-159, Cys-194, and Cys-197.

This sequence belongs to the thymidine kinase family. In terms of assembly, homotetramer.

Its subcellular location is the cytoplasm. It catalyses the reaction thymidine + ATP = dTMP + ADP + H(+). This is Thymidine kinase from Mesoplasma florum (strain ATCC 33453 / NBRC 100688 / NCTC 11704 / L1) (Acholeplasma florum).